A 357-amino-acid polypeptide reads, in one-letter code: Neurogenic differentiation factor 1 (357 aa).

Residues 1-94 (MTKSYSESGL…GPKKKKMTKA (94 aa)) form a disordered region. The span at 58–78 (EEEEEDEDLEEEEEEEEEEED) shows a compositional bias: acidic residues. The segment covering 81-93 (PKRRGPKKKKMTK) has biased composition (basic residues). Positions 87-93 (KKKKMTK) match the Nuclear localization signal motif. The 53-residue stretch at 101–153 (LRRMKANARERNRMHGLNAALDNLRKVVPCYSKTQKLSKIETLRLAKNYIWAL) folds into the bHLH domain. 4 positions are modified to phosphoserine: Ser162, Ser259, Ser266, and Ser274. A Phosphoserine; by CaMK2 modification is found at Ser336.

As to quaternary structure, efficient DNA-binding requires dimerization with another bHLH protein. Heterodimer with TCF3/E47; the heterodimer is inhibited in presence of ID2, but not NR0B2, to E-box element. Interacts with EP300; the interaction is inhibited by NR0B2. Interacts with RREB1. Interacts with ATOH8. In terms of processing, in islet cells, phosphorylated on Ser-274 upon glucose stimulation; which may be required for nuclear localization. In activated neurons, phosphorylated on Ser-336; which promotes dendritic growth. Phosphorylated by MAPK1; phosphorylation regulates heterodimerization and DNA-binding activities. Phosphorylation on Ser-266 and Ser-274 increases transactivation on the insulin promoter in glucose-stimulated insulinoma cells. Expressed in pancreatic beta cells, pulmonary neuroendocrine cells and retinal interneurons amacrine cells (at protein level). Expressed in endocrine cells of the pancreas. Expressed in the inner layer of cerebellar external granular layer (EGL). Expressed in the Ammon's horn (AH), which includes the CA1-CA3 pyramidal layer and in granule cells of the dentate gyrus (DG). Expressed in photoreceptors of the outer nuclear layer (ONL), in a subset of cells in the lower half of the inner nuclear layer (INL), and in a subset of cells in the ganglion cell layer (GCL) of the retina. Expressed in cholinergic and AII amacrine cell types. Expressed in differentiating neurons of both the central and peripheral nervous systems.

The protein localises to the cytoplasm. It is found in the nucleus. Acts as a transcriptional activator: mediates transcriptional activation by binding to E box-containing promoter consensus core sequences 5'-CANNTG-3'. Associates with the p300/CBP transcription coactivator complex to stimulate transcription of the secretin gene as well as the gene encoding the cyclin-dependent kinase inhibitor CDKN1A. Contributes to the regulation of several cell differentiation pathways, like those that promote the formation of early retinal ganglion cells, inner ear sensory neurons, granule cells forming either the cerebellum or the dentate gyrus cell layer of the hippocampus, endocrine islet cells of the pancreas and enteroendocrine cells of the small intestine. Together with PAX6 or SIX3, is required for the regulation of amacrine cell fate specification. Also required for dendrite morphogenesis and maintenance in the cerebellar cortex. Associates with chromatin to enhancer regulatory elements in genes encoding key transcriptional regulators of neurogenesis. The chain is Neurogenic differentiation factor 1 (Neurod1) from Mus musculus (Mouse).